The primary structure comprises 65 residues: Large ribosomal subunit protein bL35 (65 aa).

The interval 1–52 (MPKIKTNRGAAKRFKRTGSGGFKCVQSHRRHILTKKSTKRKRQLRSPDMVHP) is disordered. Residues 26–44 (QSHRRHILTKKSTKRKRQL) are compositionally biased toward basic residues.

It belongs to the bacterial ribosomal protein bL35 family.

This chain is Large ribosomal subunit protein bL35, found in Methylococcus capsulatus (strain ATCC 33009 / NCIMB 11132 / Bath).